The sequence spans 513 residues: Calcium-dependent protein kinase 2 (513 aa).

One can recognise a Protein kinase domain in the interval 65–323 (YSFGKELGRG…SAQVLQHQWL (259 aa)). Residues 71–79 (LGRGQFGVT) and Lys-94 each bind ATP. The Proton acceptor role is filled by Asp-189. Residues 329 to 359 (ASDKPIDSAVLSRMKQFRAMNKLKKMALKVI) are autoinhibitory domain. 4 EF-hand domains span residues 366–401 (EEIKGLKQMFMNMDTDNSGTITYEELKAGLAKLGSK), 402–437 (LSEAEVKQLMEAADVDGNGSIDYVEFITATMHRHKL), 438–473 (ERDEHLFKAFQYFDKDNSGFITRDELESALIEHEMG), and 478–508 (IREIISEVDTDNDGRINYEEFCAMMRGGMQQ). Asp-379, Asp-381, Ser-383, Thr-385, Glu-390, Asp-415, Asp-417, Asn-419, Ser-421, Glu-426, Asp-451, Asp-453, Ser-455, Glu-462, Asp-486, Asp-488, Asp-490, Arg-492, and Glu-497 together coordinate Ca(2+).

Belongs to the protein kinase superfamily. Ser/Thr protein kinase family. CDPK subfamily.

The catalysed reaction is L-seryl-[protein] + ATP = O-phospho-L-seryl-[protein] + ADP + H(+). It carries out the reaction L-threonyl-[protein] + ATP = O-phospho-L-threonyl-[protein] + ADP + H(+). Its activity is regulated as follows. Activated by calcium. Autophosphorylation may play an important role in the regulation of the kinase activity. Functionally, may play a role in signal transduction pathways that involve calcium as a second messenger. The polypeptide is Calcium-dependent protein kinase 2 (CPK2) (Zea mays (Maize)).